The sequence spans 507 residues: Protein adenylyltransferase fic-1 (507 aa).

Residues 40-56 (YSLTTVVLVSLVVTLVC) traverse the membrane as a helical segment. 2 TPR repeats span residues 146–179 (AILA…APNN) and 180–213 (PQIL…DPGN). The short motif at 269 to 274 (TVAIEG) is the Inhibitory (S/T)XXXE(G/N) motif element. Glu273 is a binding site for ATP. The Fido domain occupies 325 to 460 (ISIDDILEMH…LRPFVRYVAK (136 aa)). O-AMP-threonine; by autocatalysis is present on Thr351. ATP is bound at residue 356 to 359 (VGKF). His403 is a catalytic residue. ATP-binding positions include 407–414 (DGNGRTAR), 439–440 (YY), and Asn447. Thr475 is subject to O-AMP-threonine; by autocatalysis. The segment at 482–507 (NGEEPNLTAEESKVSEKIETECRAGS) is disordered. Residues 491 to 507 (EESKVSEKIETECRAGS) show a composition bias toward basic and acidic residues.

This sequence belongs to the fic family. Forms homodimers; homodimerization might be required for adenylyltransferase activity.

Its subcellular location is the endoplasmic reticulum membrane. It is found in the nucleus membrane. It carries out the reaction L-tyrosyl-[protein] + ATP = O-(5'-adenylyl)-L-tyrosyl-[protein] + diphosphate. It catalyses the reaction L-threonyl-[protein] + ATP = 3-O-(5'-adenylyl)-L-threonyl-[protein] + diphosphate. The catalysed reaction is 3-O-(5'-adenylyl)-L-threonyl-[protein] + H2O = L-threonyl-[protein] + AMP + H(+). With respect to regulation, the side chain of Glu-273 determines which of the two opposing activities (AMPylase or de-AMPylase) will take place. In response to endoplasmic reticulum stress, mediates de-AMPylase activity. Adenylyltransferase activity is inhibited by the inhibitory helix present at the N-terminus: Glu-273 binds ATP and competes with ATP-binding at Arg-414, thereby preventing adenylyltransferase activity. In unstressed cells, disengagement of Glu-273 promotes adenylyltransferase activity. Activation dissociates ATP-binding from Glu-273, allowing ordered binding of the entire ATP moiety with the alpha-phosphate in an orientation that is productive for accepting an incoming target hydroxyl side chain. Its function is as follows. Protein that can both mediate the addition of adenosine 5'-monophosphate (AMP) to specific residues of target proteins (AMPylation), and the removal of the same modification from target proteins (de-AMPylation), depending on the context. The side chain of Glu-273 determines which of the two opposing activities (AMPylase or de-AMPylase) will take place. Adenylyltransferase that mediates the addition of adenosine 5'-monophosphate (AMP) to specific residues of target proteins. In vivo target proteins include the heat-shock 70 family proteins hsp-1 and hsp-3 and the translation elongation factors eef-1A, eef-1G and eef-2. Can AMPylate core histone H3 in vitro. Can also act as a phosphodiesterase by mediating removal of ATP (de-AMPylation) from target proteins. Decreases susceptibility to P.aeruginosa-mediated killing and might therefore play a role in the innate immune response. The polypeptide is Protein adenylyltransferase fic-1 (fic-1) (Caenorhabditis briggsae).